The following is a 162-amino-acid chain: NADH-quinone oxidoreductase subunit I (162 aa).

4Fe-4S ferredoxin-type domains are found at residues 52–82 (LRRY…IEAG) and 93–122 (TRYD…EGPN). Cys-62, Cys-65, Cys-68, Cys-72, Cys-102, Cys-105, Cys-108, and Cys-112 together coordinate [4Fe-4S] cluster.

Belongs to the complex I 23 kDa subunit family. NDH-1 is composed of 14 different subunits. Subunits NuoA, H, J, K, L, M, N constitute the membrane sector of the complex. Requires [4Fe-4S] cluster as cofactor.

The protein resides in the cell inner membrane. It catalyses the reaction a quinone + NADH + 5 H(+)(in) = a quinol + NAD(+) + 4 H(+)(out). NDH-1 shuttles electrons from NADH, via FMN and iron-sulfur (Fe-S) centers, to quinones in the respiratory chain. The immediate electron acceptor for the enzyme in this species is believed to be ubiquinone. Couples the redox reaction to proton translocation (for every two electrons transferred, four hydrogen ions are translocated across the cytoplasmic membrane), and thus conserves the redox energy in a proton gradient. The chain is NADH-quinone oxidoreductase subunit I from Methylocella silvestris (strain DSM 15510 / CIP 108128 / LMG 27833 / NCIMB 13906 / BL2).